A 371-amino-acid polypeptide reads, in one-letter code: Cytochrome b (371 aa).

Transmembrane regions (helical) follow at residues 25-45, 69-90, 105-125, and 170-190; these read FGSMLLTCLALQVLTGFFLAV, WMMQNLHAIGASMFFICIYIHI, WMSGITLLITLMATAFFGYVL, and FFALHFILPFAIISLSSLHVI. Residues H75 and H89 each contribute to the heme b site. 2 residues coordinate heme b: H174 and H188. H193 lines the a ubiquinone pocket. Helical transmembrane passes span 218–238, 280–300, 312–332, and 339–358; these read YKDFLLLTLMVLSLFIIVSFF, LGGALALVMSIMILFTIPFTH, LYQLMFWTLVSTFITITWAAT, and FITISQVTSTLYFTFFISIP.

The protein belongs to the cytochrome b family. As to quaternary structure, the cytochrome bc1 complex contains 3 respiratory subunits (MT-CYB, CYC1 and UQCRFS1), 2 core proteins (UQCRC1 and UQCRC2) and probably 6 low-molecular weight proteins. It depends on heme b as a cofactor.

Its subcellular location is the mitochondrion inner membrane. Component of the ubiquinol-cytochrome c reductase complex (complex III or cytochrome b-c1 complex) that is part of the mitochondrial respiratory chain. The b-c1 complex mediates electron transfer from ubiquinol to cytochrome c. Contributes to the generation of a proton gradient across the mitochondrial membrane that is then used for ATP synthesis. This Malayopython reticulatus (Reticulate python) protein is Cytochrome b (MT-CYB).